Here is a 139-residue protein sequence, read N- to C-terminus: Large ribosomal subunit protein uL16 (139 aa).

The span at 1 to 19 (MLIPRRVKYRKQHHPKRTG) shows a compositional bias: basic residues. A disordered region spans residues 1–23 (MLIPRRVKYRKQHHPKRTGAAKG).

The protein belongs to the universal ribosomal protein uL16 family. In terms of assembly, part of the 50S ribosomal subunit.

In terms of biological role, binds 23S rRNA and is also seen to make contacts with the A and possibly P site tRNAs. This chain is Large ribosomal subunit protein uL16, found in Cutibacterium acnes (strain DSM 16379 / KPA171202) (Propionibacterium acnes).